We begin with the raw amino-acid sequence, 62 residues long: Conotoxin Sr5.6 (62 aa).

Positions 1–22 are cleaved as a signal peptide; sequence MRCLPVFVILLLLIASASSVDA. A propeptide spanning residues 23 to 44 is cleaved from the precursor; sequence QLKTKDDVPLTSVHDNAKGTQH. Proline amide is present on Pro-61.

It belongs to the conotoxin T superfamily. Contains 2 disulfide bonds that can be either 'C1-C3, C2-C4' or 'C1-C4, C2-C3', since these disulfide connectivities have been observed for conotoxins with cysteine framework V (for examples, see AC P0DQQ7 and AC P81755). In terms of tissue distribution, expressed by the venom duct.

Its subcellular location is the secreted. This is Conotoxin Sr5.6 from Conus spurius (Alphabet cone).